The chain runs to 69 residues: DNA-directed RNA polymerase subunit omega (69 aa).

This sequence belongs to the RNA polymerase subunit omega family. In terms of assembly, the RNAP catalytic core consists of 2 alpha, 1 beta, 1 beta' and 1 omega subunit. When a sigma factor is associated with the core the holoenzyme is formed, which can initiate transcription.

It catalyses the reaction RNA(n) + a ribonucleoside 5'-triphosphate = RNA(n+1) + diphosphate. Promotes RNA polymerase assembly. Latches the N- and C-terminal regions of the beta' subunit thereby facilitating its interaction with the beta and alpha subunits. This chain is DNA-directed RNA polymerase subunit omega, found in Symbiobacterium thermophilum (strain DSM 24528 / JCM 14929 / IAM 14863 / T).